The sequence spans 812 residues: Lon protease (812 aa).

Residues 22–215 (YAVLPLRDIV…KALSFMEAEI (194 aa)) form the Lon N-terminal domain. 367-374 (GPPGVGKT) contributes to the ATP binding site. Positions 602-783 (EDQVGVVTGL…GEVLKHALVR (182 aa)) constitute a Lon proteolytic domain. Residues Ser689 and Lys732 contribute to the active site. A disordered region spans residues 787 to 812 (PIEWTEQENPTAVPPVEDEAGASLAH).

The protein belongs to the peptidase S16 family. As to quaternary structure, homohexamer. Organized in a ring with a central cavity.

It is found in the cytoplasm. It catalyses the reaction Hydrolysis of proteins in presence of ATP.. Functionally, ATP-dependent serine protease that mediates the selective degradation of mutant and abnormal proteins as well as certain short-lived regulatory proteins. Required for cellular homeostasis and for survival from DNA damage and developmental changes induced by stress. Degrades polypeptides processively to yield small peptide fragments that are 5 to 10 amino acids long. Binds to DNA in a double-stranded, site-specific manner. In Brucella melitensis biotype 1 (strain ATCC 23456 / CCUG 17765 / NCTC 10094 / 16M), this protein is Lon protease.